Consider the following 400-residue polypeptide: Multidrug resistance protein MdtH (400 aa).

The Cytoplasmic segment spans residues 1 to 12; it reads MSRVSQARNLGK. The helical transmembrane segment at 13 to 33 threads the bilayer; that stretch reads YFLLIDNMLVVLGFFVVFPLI. The Periplasmic portion of the chain corresponds to 34-98; the sequence is SIRFVDQMGW…GFATMGIAHE (65 aa). The helical transmembrane segment at 99-116 threads the bilayer; that stretch reads PWLLWFSCLLSGLGGTLF. The Cytoplasmic portion of the chain corresponds to 117–138; the sequence is DPPRSALVVKLIRPQQRGRFFS. A helical transmembrane segment spans residues 139 to 159; sequence LLMMQDSAGAVIGALLGSWLL. Topologically, residues 160 to 164 are periplasmic; the sequence is QYDFR. A helical membrane pass occupies residues 165-185; it reads LVCATGAVLFVLCAAFNAWLL. At 186 to 213 the chain is on the cytoplasmic side; that stretch reads PAWKLSTVRTPVREGMTRVMRDKRFVTY. The helical transmembrane segment at 214-232 threads the bilayer; that stretch reads VLTLAGYYMLAVQVMLPIM. The Periplasmic portion of the chain corresponds to 233-241; that stretch reads VNDVAGAPS. The chain crosses the membrane as a helical span at residues 242–262; the sequence is AVKWMYAIEACLSLTLLYPIA. Topologically, residues 263–274 are cytoplasmic; that stretch reads RWSEKHFRLEHR. A helical transmembrane segment spans residues 275–295; sequence LMAGLLIMSLSMMPVGMVSGL. The Periplasmic segment spans residues 296–297; the sequence is QQ. Residues 298-318 form a helical membrane-spanning segment; sequence LFTLICLFYIGSIIAEPARET. Residues 319-337 are Cytoplasmic-facing; that stretch reads LSASLADARARGSYMGFSR. The chain crosses the membrane as a helical span at residues 338 to 358; it reads LGLAIGGAIGYIGGGWLFDLG. Residues 359–365 lie on the Periplasmic side of the membrane; the sequence is KSAHQPE. Residues 366 to 386 form a helical membrane-spanning segment; it reads LPWMMLGIIGIFTFLALGWQF. Over 387 to 400 the chain is Cytoplasmic; the sequence is SQKRAARRLLERDA.

Belongs to the major facilitator superfamily. DHA1 family. MdtH (TC 2.A.1.2.21) subfamily.

The protein localises to the cell inner membrane. This Shigella boydii serotype 4 (strain Sb227) protein is Multidrug resistance protein MdtH.